We begin with the raw amino-acid sequence, 321 residues long: PI-PLC X domain-containing protein 3 (321 aa).

The 176-residue stretch at 22–197 (SMHSIPLTNL…DYQVLVFYHS (176 aa)) folds into the PI-PLC X-box domain. Residues H37 and H114 contribute to the active site.

Expressed at highest levels in heart. Also detected in kidney, lung, small intestine and colon. Expressed at very low levels, if any, in leukocytes, thymus and skeletal muscle.

It localises to the cytoplasm. This Homo sapiens (Human) protein is PI-PLC X domain-containing protein 3 (PLCXD3).